The chain runs to 323 residues: Olfactory receptor 2AE1 (323 aa).

Topologically, residues 1–25 (MWQKNQTSLADFILEGLFDDSLTHL) are extracellular. N-linked (GlcNAc...) asparagine glycosylation is present at N5. The chain crosses the membrane as a helical span at residues 26–49 (FLFSLTMVVFLIAVSGNTLTILLI). Residues 50 to 57 (CIDPQLHT) lie on the Cytoplasmic side of the membrane. The chain crosses the membrane as a helical span at residues 58 to 79 (PMYFLLSQLSLMDLMHVSTIIL). At 80 to 100 (KMATNYLSGKKSISFVGCATQ) the chain is on the extracellular side. The cysteines at positions 97 and 189 are disulfide-linked. The helical transmembrane segment at 101–120 (HFLYLCLGGAECFLLAVMSY) threads the bilayer. Residues 121–139 (DRYVAICHPLRYAVLMNKK) lie on the Cytoplasmic side of the membrane. A helical transmembrane segment spans residues 140–158 (VGLMMAVMSWLGASVNSLI). The Extracellular portion of the chain corresponds to 159–195 (HMAILMHFPFCGPRKVYHFYCEFPAVVKLVCGDITVY). The chain crosses the membrane as a helical span at residues 196-218 (ETTVYISSILLLLPIFLISTSYV). The Cytoplasmic segment spans residues 219 to 235 (FILQSVIQMRSSGSKRN). The helical transmembrane segment at 236 to 258 (AFATCGSHLTVVSLWFGACIFSY) threads the bilayer. The Extracellular portion of the chain corresponds to 259 to 271 (MRPRSQCTLLQNK). Residues 272–291 (VGSVFYSIITPTLNSLIYTL) traverse the membrane as a helical segment. Topologically, residues 292–323 (RNKDVAKALRRVLRRDVITQCIQRLQLWLPRV) are cytoplasmic.

Belongs to the G-protein coupled receptor 1 family.

It localises to the cell membrane. In terms of biological role, odorant receptor. The polypeptide is Olfactory receptor 2AE1 (OR2AE1) (Homo sapiens (Human)).